The primary structure comprises 400 residues: Tryptophan synthase beta chain (400 aa).

K91 is modified (N6-(pyridoxal phosphate)lysine).

This sequence belongs to the TrpB family. As to quaternary structure, tetramer of two alpha and two beta chains. Pyridoxal 5'-phosphate is required as a cofactor.

The enzyme catalyses (1S,2R)-1-C-(indol-3-yl)glycerol 3-phosphate + L-serine = D-glyceraldehyde 3-phosphate + L-tryptophan + H2O. It functions in the pathway amino-acid biosynthesis; L-tryptophan biosynthesis; L-tryptophan from chorismate: step 5/5. In terms of biological role, the beta subunit is responsible for the synthesis of L-tryptophan from indole and L-serine. This Listeria monocytogenes serovar 1/2a (strain ATCC BAA-679 / EGD-e) protein is Tryptophan synthase beta chain.